Consider the following 362-residue polypeptide: 3-isopropylmalate dehydrogenase (362 aa).

Residue 77 to 88 coordinates NAD(+); the sequence is GPKWGTGAVRPE. Residues Arg-95, Arg-105, Arg-134, and Asp-223 each coordinate substrate. 3 residues coordinate Mg(2+): Asp-223, Asp-248, and Asp-252. 287–298 contributes to the NAD(+) binding site; the sequence is GSAPDLPANKVN.

This sequence belongs to the isocitrate and isopropylmalate dehydrogenases family. In terms of assembly, homodimer. Requires Mg(2+) as cofactor. Mn(2+) is required as a cofactor.

Its subcellular location is the cytoplasm. It carries out the reaction (2R,3S)-3-isopropylmalate + NAD(+) = 4-methyl-2-oxopentanoate + CO2 + NADH. It functions in the pathway amino-acid biosynthesis; L-leucine biosynthesis; L-leucine from 3-methyl-2-oxobutanoate: step 3/4. In terms of biological role, catalyzes the oxidation of 3-carboxy-2-hydroxy-4-methylpentanoate (3-isopropylmalate) to 3-carboxy-4-methyl-2-oxopentanoate. The product decarboxylates to 4-methyl-2 oxopentanoate. The protein is 3-isopropylmalate dehydrogenase (LEU2) of Kluyveromyces lactis (strain ATCC 8585 / CBS 2359 / DSM 70799 / NBRC 1267 / NRRL Y-1140 / WM37) (Yeast).